The chain runs to 199 residues: MAPKVAIIIYSLYHHIAQLAEEEKKGIEAAGGVADIYQVPETLSDDVLKLLHAPAKPNYPIATNDTLTGYDAYLFGIPTRFGNYPAQFKAFWDATGGLWAQGALAGKQAGIFVSTSGQGGGQETTAVNALSVLVHHGIIFVPLGYAKAFPLQTNLEEIHGGSPYGAGTFAGVDGSRQPTKLEKEIAFIQGKSFYETVSK.

The Flavodoxin-like domain occupies 5–193 (VAIIIYSLYH…EIAFIQGKSF (189 aa)). Residues 11–15 (SLYHH) and 111–165 (IFVS…SPYG) each bind FMN.

Belongs to the WrbA family. The cofactor is FMN.

The protein localises to the cell membrane. It carries out the reaction a quinone + NADH + H(+) = a quinol + NAD(+). The catalysed reaction is a quinone + NADPH + H(+) = a quinol + NADP(+). Flavodoxin-like protein (FLP) that plays a role in cell wall integrity, oxidative stress protection and virulence. FLPs act as NAD(P)H quinone oxidoreductases. Reduces ubiquinone (coenzyme Q), enabling it to serve as an antioxidant in the membrane. In Candida albicans (strain SC5314 / ATCC MYA-2876) (Yeast), this protein is NAD(P)H quinone oxidoreductase PST3.